The chain runs to 106 residues: Cell division protein FtsB (106 aa).

Residues 1–3 (MGK) are Cytoplasmic-facing. The chain crosses the membrane as a helical span at residues 4–21 (LTLLLLALLGWLQYSLWL). The Periplasmic segment spans residues 22 to 106 (GKNGVHDYVR…ASSSQNNLQK (85 aa)). A coiled-coil region spans residues 40–62 (QGSNAKLKARNDQLFAEIDDLNG).

It belongs to the FtsB family. As to quaternary structure, part of a complex composed of FtsB, FtsL and FtsQ.

The protein localises to the cell inner membrane. Essential cell division protein. May link together the upstream cell division proteins, which are predominantly cytoplasmic, with the downstream cell division proteins, which are predominantly periplasmic. The polypeptide is Cell division protein FtsB (Serratia proteamaculans (strain 568)).